A 303-amino-acid chain; its full sequence is D-alanine--D-alanine ligase (303 aa).

In terms of domain architecture, ATP-grasp spans 104–300; that stretch reads KLLWNAVGLP…FEKLVERVLE (197 aa). 132–187 contributes to the ATP binding site; the sequence is IAKLSLPVFVKPSSEGSSVGVFKVKTKEELLPAITAALEFDTIVLVEEFLTGAEYS. 3 residues coordinate Mg(2+): Asp-254, Glu-267, and Asn-269.

The protein belongs to the D-alanine--D-alanine ligase family. It depends on Mg(2+) as a cofactor. Requires Mn(2+) as cofactor.

The protein resides in the cytoplasm. The catalysed reaction is 2 D-alanine + ATP = D-alanyl-D-alanine + ADP + phosphate + H(+). Its pathway is cell wall biogenesis; peptidoglycan biosynthesis. Cell wall formation. The chain is D-alanine--D-alanine ligase from Haemophilus ducreyi (strain 35000HP / ATCC 700724).